The chain runs to 320 residues: Very-long-chain 3-oxoacyl-CoA reductase (320 aa).

The chain crosses the membrane as a helical span at residues 17–37 (FWYLGVVAAVWWGLRAAWCLL). An NADP(+)-binding site is contributed by 56-85 (GKWAVVTGATDGIGKAYAEELAKRGMNIVL). The next 2 helical transmembrane spans lie at 189-209 (GVIL…LTVY) and 283-303 (AIMG…SLGM). Ser196 contributes to the substrate binding site. The active-site Proton acceptor is the Tyr209.

Belongs to the short-chain dehydrogenases/reductases (SDR) family. 17-beta-HSD 3 subfamily.

Its subcellular location is the endoplasmic reticulum membrane. The enzyme catalyses a very-long-chain (3R)-3-hydroxyacyl-CoA + NADP(+) = a very-long-chain 3-oxoacyl-CoA + NADPH + H(+). The catalysed reaction is 17beta-estradiol + NAD(+) = estrone + NADH + H(+). It carries out the reaction 17beta-estradiol + NADP(+) = estrone + NADPH + H(+). It catalyses the reaction 3-oxooctadecanoyl-CoA + NADPH + H(+) = (3R)-hydroxyoctadecanoyl-CoA + NADP(+). The enzyme catalyses (7Z,10Z,13Z,16Z)-3-oxodocosatetraenoyl-CoA + NADPH + H(+) = (3R)-hydroxy-(7Z,10Z,13Z,16Z)-docosatetraenoyl-CoA + NADP(+). The catalysed reaction is 3-oxo-(7Z,10Z,13Z,16Z,19Z)-docosapentaenoyl-CoA + NADPH + H(+) = (3R)-hydroxy-(7Z,10Z,13Z,16Z,19Z)-docosapentaenoyl-CoA + NADP(+). It carries out the reaction (8Z,11Z,14Z)-3-oxoeicosatrienoyl-CoA + NADPH + H(+) = (3R)-hydroxy-(8Z,11Z,14Z)-eicosatrienoyl-CoA + NADP(+). Its pathway is lipid metabolism; fatty acid biosynthesis. It participates in steroid biosynthesis; estrogen biosynthesis. Catalyzes the second of the four reactions of the long-chain fatty acids elongation cycle. This endoplasmic reticulum-bound enzymatic process, allows the addition of two carbons to the chain of long- and very long-chain fatty acids/VLCFAs per cycle. This enzyme has a 3-ketoacyl-CoA reductase activity, reducing 3-ketoacyl-CoA to 3-hydroxyacyl-CoA, within each cycle of fatty acid elongation. Thereby, it may participate in the production of VLCFAs of different chain lengths that are involved in multiple biological processes as precursors of membrane lipids and lipid mediators. May also catalyze the transformation of estrone (E1) into estradiol (E2) and play a role in estrogen formation. The chain is Very-long-chain 3-oxoacyl-CoA reductase (hsd17b12) from Xenopus tropicalis (Western clawed frog).